Consider the following 73-residue polypeptide: Translation initiation factor IF-1 2 (73 aa).

One can recognise an S1-like domain in the interval 1–72 (MAKEELVEFG…TKGRINYRHK (72 aa)).

Belongs to the IF-1 family. In terms of assembly, component of the 30S ribosomal translation pre-initiation complex which assembles on the 30S ribosome in the order IF-2 and IF-3, IF-1 and N-formylmethionyl-tRNA(fMet); mRNA recruitment can occur at any time during PIC assembly.

Its subcellular location is the cytoplasm. Functionally, one of the essential components for the initiation of protein synthesis. Stabilizes the binding of IF-2 and IF-3 on the 30S subunit to which N-formylmethionyl-tRNA(fMet) subsequently binds. Helps modulate mRNA selection, yielding the 30S pre-initiation complex (PIC). Upon addition of the 50S ribosomal subunit IF-1, IF-2 and IF-3 are released leaving the mature 70S translation initiation complex. This Cupriavidus pinatubonensis (strain JMP 134 / LMG 1197) (Cupriavidus necator (strain JMP 134)) protein is Translation initiation factor IF-1 2.